The primary structure comprises 443 residues: SAM50-like protein CG7639 (443 aa).

The 79-residue stretch at 23-101 (ARVDRVNVSG…QGYEVTFKGN (79 aa)) folds into the POTRA domain.

Belongs to the SAM50/omp85 family. As to quaternary structure, associates with the mitochondrial contact site and cristae organizing system (MICOS) complex (also known as MINOS or MitOS complex).

Its subcellular location is the mitochondrion outer membrane. Its function is as follows. May play a role in the maintenance of the structure of mitochondrial cristae. The chain is SAM50-like protein CG7639 from Drosophila melanogaster (Fruit fly).